The primary structure comprises 454 residues: Zinc finger CCCH domain-containing protein 66 (454 aa).

Residues 1–23 (MAAGAGAGGGGGEGDSNGGGTSP) are compositionally biased toward gly residues. Positions 1 to 30 (MAAGAGAGGGGGEGDSNGGGTSPGGVSAAA) are disordered. 5 consecutive C3H1-type zinc fingers follow at residues 66 to 94 (RIGEPDCSYYMRTGLCRFGMTCKFNHPPN), 111 to 139 (RVGQPECQYYLKTGTCKFGATCKFHHPRE), 157 to 185 (RPNEKECAYYLRTGQCKFASTCKFHHPQP), 318 to 346 (RPDQPECQFYMKTGDCKFGAVCKFHHPKE), and 364 to 392 (RPGEPVCTFYSRYGICKFGPNCKFDHPMG). The tract at residues 405–454 (DVSSMHYQLSPSPGHPGILLDGGSGRSHRVPQSDSQQIPSGDGNAEREAS) is disordered. Positions 434–443 (VPQSDSQQIP) are enriched in polar residues.

The polypeptide is Zinc finger CCCH domain-containing protein 66 (Oryza sativa subsp. japonica (Rice)).